The sequence spans 198 residues: ADP-ribosylation factor-like protein 3 (198 aa).

An N-acetylmethionine modification is found at methionine 1. 24–31 contacts GTP; it reads GLDNAGKT. A Glycyl lysine isopeptide (Lys-Gly) (interchain with G-Cter in ubiquitin) cross-link involves residue lysine 50. Residues 74–78 and 133–136 contribute to the GTP site; these read DVGGQ and NKQD.

This sequence belongs to the small GTPase superfamily. Arf family. Interacts with SYS1 and SLO1.

It is found in the golgi apparatus. Functionally, involved in the targeting of ARL1 to the Golgi. Can bind and hydrolyze GTP. This Saccharomyces cerevisiae (strain ATCC 204508 / S288c) (Baker's yeast) protein is ADP-ribosylation factor-like protein 3 (ARL3).